Reading from the N-terminus, the 404-residue chain is Subtilisin-like proteinase Mp1 (404 aa).

The signal sequence occupies residues M1–A19. A propeptide spanning residues A20–Y112 is cleaved from the precursor. The Inhibitor I9 domain occupies S33 to L111. Residues P121–A404 enclose the Peptidase S8 domain. N133 carries N-linked (GlcNAc...) asparagine glycosylation. Catalysis depends on charge relay system residues D154, H186, and S347.

The protein belongs to the peptidase S8 family.

Its subcellular location is the secreted. The sequence is that of Subtilisin-like proteinase Mp1 from Magnaporthiopsis poae (Kentucky bluegrass fungus).